Consider the following 187-residue polypeptide: Large ribosomal subunit protein uL22 (187 aa).

The segment at 161–187 is disordered; that stretch reads APTDDAPAKKKLSKKKLARQKEKMMRE. Basic residues predominate over residues 169 to 178; that stretch reads KKKLSKKKLA.

Belongs to the universal ribosomal protein uL22 family.

The sequence is that of Large ribosomal subunit protein uL22 (RpL17) from Bombyx mori (Silk moth).